Reading from the N-terminus, the 678-residue chain is uncharacterized protein (678 aa).

8 consecutive transmembrane segments (helical) span residues 228–250 (FFVILILGAVITLLLSLAIFSFL), 263–285 (LAMWWLPAILGVLSVCSVFVATQ), 300–322 (STGALPLLALIVKHSIAIALSCV), 334–356 (MLHNGFIGGYLASTLCLLYAVLF), 361–380 (FSLSAVFALEYALSLVFFSA), 387–405 (RIMLAMMFLLFAPFLYAYL), 420–439 (NVFFALGCVPFMLFMLTLFF), and 455–477 (NLLLSGALLTVLVINGVLWSVSL). The interval 653-678 (PSSQGVHATPEKNACIRDETVPNLQE) is disordered.

It localises to the cell membrane. This is an uncharacterized protein from Treponema pallidum (strain Nichols).